A 680-amino-acid chain; its full sequence is SH3 domain-binding protein 1 (680 aa).

The segment covering 1-11 has biased composition (basic residues); that stretch reads MMKRQLHRMRQ. Disordered regions lie at residues 1–24 and 160–184; these read MMKRQLHRMRQLAHTGSSGRTPET and SQAAKNSGSNQGLGGASGSHTHTTT. Positions 1 to 275 are interaction with CGNL1; sequence MMKRQLHRMR…TAAPFSRVYG (275 aa). One can recognise a BAR domain in the interval 81–262; the sequence is MAESFKELDP…RDNHSQADHS (182 aa). Residues 160-169 show a composition bias toward polar residues; the sequence is SQAAKNSGSN. Phosphoserine occurs at positions 241 and 262. One can recognise a Rho-GAP domain in the interval 276–469; the sequence is VSLRTHLQDL…ALIQNADTLF (194 aa). The segment at 470-680 is interaction with CD2AP; the sequence is PGDINFNVSG…RPRGLISETE (211 aa). The segment at 488 to 680 is disordered; it reads EKVSSQQVSE…RPRGLISETE (193 aa). Over residues 502-516 the composition is skewed to pro residues; sequence VTVPAPATTPAPTPA. Phosphoserine is present on Ser-535. Positions 536 to 546 are enriched in polar residues; sequence PKVSRNPTETA. The span at 561-571 shows a compositional bias: pro residues; that stretch reads PARPTMPPPQP. Position 582 is a phosphoserine (Ser-582). At Thr-592 the chain carries Phosphothreonine. The SH3-binding signature appears at 607-616; it reads APTMPPPLPP. The span at 609-621 shows a compositional bias: pro residues; that stretch reads TMPPPLPPVPPQP. Ser-632 is modified (phosphoserine). Positions 660 to 671 are enriched in pro residues; sequence HPPPPALPPQPR.

As to quaternary structure, interacts with RAC1. Interacts with the exocyst via EXOC4 and EXOC8; required for the localization of both SH3BP1 and the exocyst to the leading edge of migrating cells. Interacts with CD2AP and CGNL1; probably part of a complex at cell junctions. Interacts with CAPZA1; recruits CAPZA1 to forming cell junctions. May interact with AFDN. Interacts with PLXND1; they dissociate upon SEMA3E binding to PLXND1 allowing SH3BP1 to transduce downstream signal through RAC1 inactivation. Interacts with ABL1, GRB2 and SRC (via SH3 domain). Expressed in all tissues examined. Highest levels found in spleen and brain, lowest in heart and liver.

The protein localises to the cell projection. Its subcellular location is the cell junction. It localises to the tight junction. The protein resides in the adherens junction. It is found in the phagocytic cup. The protein localises to the nucleus. Its subcellular location is the cytoplasm. It localises to the cytosol. GTPase activating protein (GAP) which specifically converts GTP-bound Rho-type GTPases including RAC1 and CDC42 in their inactive GDP-bound form. By specifically inactivating RAC1 at the leading edge of migrating cells, it regulates the spatiotemporal organization of cell protrusions which is important for proper cell migration. Also negatively regulates CDC42 in the process of actin remodeling and the formation of epithelial cell junctions. Through its GAP activity toward RAC1 and/or CDC42 plays a specific role in phagocytosis of large particles. Specifically recruited by a PI3 kinase/PI3K-dependent mechanism to sites of large particles engagement, inactivates RAC1 and/or CDC42 allowing the reorganization of the underlying actin cytoskeleton required for engulfment. It also plays a role in angiogenesis and the process of repulsive guidance as part of a semaphorin-plexin signaling pathway. Following the binding of PLXND1 to extracellular SEMA3E it dissociates from PLXND1 and inactivates RAC1, inducing the intracellular reorganization of the actin cytoskeleton and the collapse of cells. The chain is SH3 domain-binding protein 1 from Mus musculus (Mouse).